The sequence spans 542 residues: E3 ubiquitin-protein ligase RNF217 (542 aa).

Disordered regions lie at residues methionine 1–glycine 140 and alanine 176–leucine 216. A compositionally biased stretch (low complexity) spans serine 37–proline 50. Residues aspartate 122–glutamate 132 show a composition bias toward acidic residues. The span at proline 185–asparagine 196 shows a compositional bias: pro residues. The segment covering proline 197–threonine 213 has biased composition (low complexity). The interval methionine 259–tyrosine 478 is TRIAD supradomain. Positions 263, 266, 283, 286, 383, 386, 391, 396, 423, and 426 each coordinate Zn(2+). The RING-type 1 zinc finger occupies cysteine 263–cysteine 309. Residues isoleucine 328–cysteine 396 form an IBR-type zinc finger. The RING-type 2; atypical zinc finger occupies cysteine 423 to cysteine 452. Cysteine 436 is a catalytic residue. 6 residues coordinate Zn(2+): cysteine 441, cysteine 444, cysteine 449, cysteine 452, histidine 465, and cysteine 474. Residues leucine 503 to phenylalanine 523 traverse the membrane as a helical segment.

Belongs to the RBR family. RNF217 subfamily. In terms of assembly, interacts with HAX1. As to expression, mainly expressed in testis and skeletal muscle.

The protein resides in the membrane. The protein localises to the cytoplasm. The enzyme catalyses [E2 ubiquitin-conjugating enzyme]-S-ubiquitinyl-L-cysteine + [acceptor protein]-L-lysine = [E2 ubiquitin-conjugating enzyme]-L-cysteine + [acceptor protein]-N(6)-ubiquitinyl-L-lysine.. The protein operates within protein modification; protein ubiquitination. Functionally, E3 ubiquitin-protein ligase which accepts ubiquitin from E2 ubiquitin-conjugating enzymes in the form of a thioester and then directly transfers the ubiquitin to targeted substrates. Mediates the degradation of the iron exporter ferroportin/SLC40A1 and thus regulates iron homeostasis. The chain is E3 ubiquitin-protein ligase RNF217 (RNF217) from Homo sapiens (Human).